The chain runs to 485 residues: Glutamate--tRNA ligase (485 aa).

Positions 11-21 match the 'HIGH' region motif; sequence PSPTGLLHIGN. Residues 255–259 carry the 'KMSKS' region motif; that stretch reads KLSKR. ATP is bound at residue K258.

The protein belongs to the class-I aminoacyl-tRNA synthetase family. Glutamate--tRNA ligase type 1 subfamily. Monomer.

Its subcellular location is the cytoplasm. It catalyses the reaction tRNA(Glu) + L-glutamate + ATP = L-glutamyl-tRNA(Glu) + AMP + diphosphate. Catalyzes the attachment of glutamate to tRNA(Glu) in a two-step reaction: glutamate is first activated by ATP to form Glu-AMP and then transferred to the acceptor end of tRNA(Glu). This Streptococcus sanguinis (strain SK36) protein is Glutamate--tRNA ligase.